Consider the following 425-residue polypeptide: Oxalate decarboxylase ARB_02208 (425 aa).

The N-terminal stretch at 1–19 (MKFGSALVAAVAAVAGVAA) is a signal peptide. The region spanning 73 to 236 (FSLSKTRMFH…FNISTGGTFD (164 aa)) is the Cupin type-1 1 domain. H116, H118, E122, and H161 together coordinate Mn(2+). Residues N228, N247, N254, and N265 are each glycosylated (N-linked (GlcNAc...) asparagine). The Cupin type-1 2 domain maps to 270–414 (FHIRDAPEIQ…AINVPIDVID (145 aa)). 4 residues coordinate Mn(2+): H317, H319, E324, and H363. An N-linked (GlcNAc...) asparagine glycan is attached at N367. The active-site Proton donor is the E378.

Requires Mn(2+) as cofactor.

It is found in the secreted. It catalyses the reaction oxalate + H(+) = formate + CO2. Converts oxalate to formate and CO(2) in an O(2)-dependent reaction. Can also catalyze minor side reactions: oxalate oxidation to produce H(2)O(2), and oxalate-dependent, H(2)O(2)-independent dye oxidations. The sequence is that of Oxalate decarboxylase ARB_02208 from Arthroderma benhamiae (strain ATCC MYA-4681 / CBS 112371) (Trichophyton mentagrophytes).